The chain runs to 91 residues: Large ribosomal subunit protein bL31B (91 aa).

It belongs to the bacterial ribosomal protein bL31 family. Type B subfamily. Part of the 50S ribosomal subunit.

In Neisseria meningitidis serogroup C (strain 053442), this protein is Large ribosomal subunit protein bL31B.